The sequence spans 206 residues: Large ribosomal subunit protein uL4 (206 aa).

Residues 47–94 are disordered; it reads NRAQKGRAEVSKSTRKPWRQKGTGRARAGMASSPLWRGGGRVFPNSPE. Residues 59-70 show a composition bias toward basic residues; it reads STRKPWRQKGTG.

This sequence belongs to the universal ribosomal protein uL4 family. Part of the 50S ribosomal subunit.

In terms of biological role, one of the primary rRNA binding proteins, this protein initially binds near the 5'-end of the 23S rRNA. It is important during the early stages of 50S assembly. It makes multiple contacts with different domains of the 23S rRNA in the assembled 50S subunit and ribosome. Forms part of the polypeptide exit tunnel. In Aromatoleum aromaticum (strain DSM 19018 / LMG 30748 / EbN1) (Azoarcus sp. (strain EbN1)), this protein is Large ribosomal subunit protein uL4.